Here is a 67-residue protein sequence, read N- to C-terminus: MRTLCSLLLICCLLFSYTTPAANSIIGVSEMERCHKKGGYCYFYCFSSHKKIGSCFPEWPRCCKNIK.

Positions 1–24 (MRTLCSLLLICCLLFSYTTPAANS) are cleaved as a signal peptide. 3 cysteine pairs are disulfide-bonded: Cys34–Cys62, Cys41–Cys55, and Cys45–Cys63.

The protein belongs to the beta-defensin family. Weakly expressed in adult and neonatal brain.

The protein resides in the secreted. Its function is as follows. Has antibacterial activity. The polypeptide is Beta-defensin 9 (Defb9) (Mus musculus (Mouse)).